Reading from the N-terminus, the 376-residue chain is Succinyl-diaminopimelate desuccinylase (376 aa).

Zn(2+) is bound at residue histidine 67. Aspartate 69 is a catalytic residue. Aspartate 100 is a Zn(2+) binding site. Residue glutamate 134 is the Proton acceptor of the active site. Zn(2+) contacts are provided by glutamate 135, glutamate 163, and histidine 349.

The protein belongs to the peptidase M20A family. DapE subfamily. Homodimer. Zn(2+) serves as cofactor. The cofactor is Co(2+).

It catalyses the reaction N-succinyl-(2S,6S)-2,6-diaminopimelate + H2O = (2S,6S)-2,6-diaminopimelate + succinate. Its pathway is amino-acid biosynthesis; L-lysine biosynthesis via DAP pathway; LL-2,6-diaminopimelate from (S)-tetrahydrodipicolinate (succinylase route): step 3/3. Its function is as follows. Catalyzes the hydrolysis of N-succinyl-L,L-diaminopimelic acid (SDAP), forming succinate and LL-2,6-diaminopimelate (DAP), an intermediate involved in the bacterial biosynthesis of lysine and meso-diaminopimelic acid, an essential component of bacterial cell walls. The chain is Succinyl-diaminopimelate desuccinylase from Xanthomonas campestris pv. campestris (strain 8004).